A 626-amino-acid polypeptide reads, in one-letter code: UvrABC system protein C (626 aa).

The GIY-YIG domain maps to 25-104 (TSPGVYRFSN…IKELKPRYNV (80 aa)). Residues 218 to 253 (SALLRDLSAEMQKKAKELKFEEAAALKAQIEGLKRY) form the UVR domain.

The protein belongs to the UvrC family. As to quaternary structure, interacts with UvrB in an incision complex.

It localises to the cytoplasm. Its function is as follows. The UvrABC repair system catalyzes the recognition and processing of DNA lesions. UvrC both incises the 5' and 3' sides of the lesion. The N-terminal half is responsible for the 3' incision and the C-terminal half is responsible for the 5' incision. This chain is UvrABC system protein C, found in Chlorobaculum tepidum (strain ATCC 49652 / DSM 12025 / NBRC 103806 / TLS) (Chlorobium tepidum).